Consider the following 642-residue polypeptide: Probable Xaa-Pro aminopeptidase P (642 aa).

Residues Asp-439, Asp-450, Glu-548, and Glu-562 each coordinate Mn(2+).

Belongs to the peptidase M24B family. The cofactor is Mn(2+).

It carries out the reaction Release of any N-terminal amino acid, including proline, that is linked to proline, even from a dipeptide or tripeptide.. Its function is as follows. Catalyzes the removal of a penultimate prolyl residue from the N-termini of peptides. The chain is Probable Xaa-Pro aminopeptidase P (AMPP) from Laccaria bicolor (strain S238N-H82 / ATCC MYA-4686) (Bicoloured deceiver).